The following is a 237-amino-acid chain: D-aminoacyl-tRNA deacylase (237 aa).

Belongs to the DtdA deacylase family. As to quaternary structure, monomer. Requires Zn(2+) as cofactor.

The enzyme catalyses a D-aminoacyl-tRNA + H2O = a tRNA + a D-alpha-amino acid + H(+). The catalysed reaction is glycyl-tRNA(Ala) + H2O = tRNA(Ala) + glycine + H(+). Functionally, D-aminoacyl-tRNA deacylase with broad substrate specificity. By recycling D-aminoacyl-tRNA to D-amino acids and free tRNA molecules, this enzyme counteracts the toxicity associated with the formation of D-aminoacyl-tRNA entities in vivo. The protein is D-aminoacyl-tRNA deacylase of Sulfurisphaera tokodaii (strain DSM 16993 / JCM 10545 / NBRC 100140 / 7) (Sulfolobus tokodaii).